The sequence spans 529 residues: Delayed-rectifier potassium channel regulatory subunit KCNS1 (529 aa).

Over 1–217 the chain is Cytoplasmic; the sequence is MLMLLVRGTR…LTMENPGYSL (217 aa). The chain crosses the membrane as a helical span at residues 218-239; it reads PSKLFSCVSISVVLASIAAMCI. The Extracellular segment spans residues 240-270; that stretch reads HSLPEYQAREAAAAVAAVAAGRSAEGVRDDP. The helical transmembrane segment at 271 to 293 threads the bilayer; that stretch reads VLRRLEYFCIAWFSFEVSSRLLL. Residues 294–304 lie on the Cytoplasmic side of the membrane; it reads APSTRNFFCHP. A helical transmembrane segment spans residues 305-322; it reads LNLIDIVSVLPFYLTLLA. Over 323–340 the chain is Extracellular; sequence GAALGDHGGTGGKEFGHL. The chain crosses the membrane as a helical; Voltage-sensor span at residues 341–361; sequence GKVVQVFRLMRIFRVLKLARH. Residues 362-376 are Cytoplasmic-facing; sequence STGLRSLGATLKHSY. Residues 377 to 398 form a helical membrane-spanning segment; that stretch reads REVGILLLYLAVGVSVFSGVAY. Residues 399–411 are Extracellular-facing; that stretch reads TAEKEEHVGFDTI. The helical intramembrane region spans 412-423; the sequence is PACWWWGTVSMT. Positions 424–429 match the Selectivity filter motif; sequence TVGYGD. Residues 424–431 lie within the membrane without spanning it; the sequence is TVGYGDVV. The Extracellular segment spans residues 432–438; it reads PVTVAGK. The chain crosses the membrane as a helical span at residues 439 to 467; the sequence is LAASGCILGGILVVALPITIIFNKFSHFY. The Cytoplasmic portion of the chain corresponds to 468–529; that stretch reads RRQKALEAAV…PSEPPHSQMY (62 aa). A disordered region spans residues 494–529; sequence GVSEASLETSRETSQEGRSADLETQVPSEPPHSQMY. Positions 502–514 are enriched in basic and acidic residues; it reads TSRETSQEGRSAD.

The protein belongs to the potassium channel family. S (TC 1.A.1.2) subfamily. Kv9.1/KCNS1 sub-subfamily. As to quaternary structure, heterotetramer with KCNB1. Heterotetramer with KCNB2. Does not form homomultimers.

The protein resides in the cell membrane. In terms of biological role, potassium channel regulatory subunit that modulate the delayed rectifier voltage-gated potassium channel activity of KCNB1 and KCNB2 by altering their kinetics, expression levels, and shifting the half-inactivation potential to more polarized values. While it does not form functional channels on its own, it can form functional heterotetrameric channels with KCNB1 and KCNB2. Each regulatory subunit has unique regulatory properties that can lead to extensive inhibition, significant changes in kinetics, and/or substantial shifts in the voltage dependencies of the inactivation process. The sequence is that of Delayed-rectifier potassium channel regulatory subunit KCNS1 from Aotus nancymaae (Ma's night monkey).